The following is a 138-amino-acid chain: Nucleoside diphosphate kinase (138 aa).

6 residues coordinate ATP: lysine 9, phenylalanine 57, arginine 85, threonine 91, arginine 102, and asparagine 112. Residue histidine 115 is the Pros-phosphohistidine intermediate of the active site.

This sequence belongs to the NDK family. In terms of assembly, homotetramer. Requires Mg(2+) as cofactor.

Its subcellular location is the cytoplasm. It catalyses the reaction a 2'-deoxyribonucleoside 5'-diphosphate + ATP = a 2'-deoxyribonucleoside 5'-triphosphate + ADP. It carries out the reaction a ribonucleoside 5'-diphosphate + ATP = a ribonucleoside 5'-triphosphate + ADP. In terms of biological role, major role in the synthesis of nucleoside triphosphates other than ATP. The ATP gamma phosphate is transferred to the NDP beta phosphate via a ping-pong mechanism, using a phosphorylated active-site intermediate. This is Nucleoside diphosphate kinase from Lawsonia intracellularis (strain PHE/MN1-00).